Reading from the N-terminus, the 1444-residue chain is Probable chitinase LysM18 (1444 aa).

LysM domains lie at 256–302 (STVQ…HFCC) and 321–369 (TTYT…IICL). The 69-residue stretch at 382–450 (NAECGPQVPG…TNGCISNCGT (69 aa)) folds into the Chitin-binding type-1 domain. Cystine bridges form between Cys-385–Cys-413, Cys-407–Cys-419, Cys-412–Cys-426, and Cys-444–Cys-448. The 371-residue stretch at 461–831 (YRKVGFYEGF…STSWTKFTSD (371 aa)) folds into the GH18 domain. Glu-582 (proton donor) is an active-site residue. Tyr-583 and Trp-808 together coordinate chitin.

It belongs to the glycosyl hydrolase 18 family. Chitinase class V subfamily.

It carries out the reaction Random endo-hydrolysis of N-acetyl-beta-D-glucosaminide (1-&gt;4)-beta-linkages in chitin and chitodextrins.. Its function is as follows. Probable chitinase involved in the degradation of chitin, a component of the cell walls of fungi and exoskeletal elements of some animals (including worms and arthropods). Might be involved in manipulation of host defenses for successful infection. This is Probable chitinase LysM18 from Penicillium expansum (Blue mold rot fungus).